The following is a 20-amino-acid chain: Maximin-Ht (20 aa).

It belongs to the bombinin family. In terms of tissue distribution, expressed by the skin glands.

Its subcellular location is the secreted. Has antimicrobial activity. The polypeptide is Maximin-Ht (Bombina maxima (Giant fire-bellied toad)).